A 172-amino-acid polypeptide reads, in one-letter code: MDRHRDFGKDRLRDKEFTEKLIKLNRTAKVVKGGRRFSFSALTVVGDQKGRVGFGFGKAGDVSEAIRKSVERAKRSMVLFPLKDGTIPHEVQAKFKGSLVLLRPACSGTGIIAGGTVRAIMEVAGATDVLSKSLGSNSAINVVRATFGAVAQLMDARKLARERGKALVDMWG.

An S5 DRBM domain is found at 17–80 (FTEKLIKLNR…ERAKRSMVLF (64 aa)).

It belongs to the universal ribosomal protein uS5 family. In terms of assembly, part of the 30S ribosomal subunit. Contacts proteins S4 and S8.

In terms of biological role, with S4 and S12 plays an important role in translational accuracy. Functionally, located at the back of the 30S subunit body where it stabilizes the conformation of the head with respect to the body. The protein is Small ribosomal subunit protein uS5 of Treponema pallidum (strain Nichols).